The chain runs to 180 residues: NADH-quinone oxidoreductase subunit I (180 aa).

4Fe-4S ferredoxin-type domains follow at residues 50-80 (LTRD…LQKA) and 90-119 (EFFR…LTPD). [4Fe-4S] cluster is bound by residues Cys-60, Cys-63, Cys-66, Cys-70, Cys-99, Cys-102, Cys-105, and Cys-109.

This sequence belongs to the complex I 23 kDa subunit family. As to quaternary structure, NDH-1 is composed of 13 different subunits. Subunits NuoA, H, J, K, L, M, N constitute the membrane sector of the complex. Requires [4Fe-4S] cluster as cofactor.

The protein localises to the cell inner membrane. It catalyses the reaction a quinone + NADH + 5 H(+)(in) = a quinol + NAD(+) + 4 H(+)(out). NDH-1 shuttles electrons from NADH, via FMN and iron-sulfur (Fe-S) centers, to quinones in the respiratory chain. The immediate electron acceptor for the enzyme in this species is believed to be ubiquinone. Couples the redox reaction to proton translocation (for every two electrons transferred, four hydrogen ions are translocated across the cytoplasmic membrane), and thus conserves the redox energy in a proton gradient. The polypeptide is NADH-quinone oxidoreductase subunit I (Pectobacterium atrosepticum (strain SCRI 1043 / ATCC BAA-672) (Erwinia carotovora subsp. atroseptica)).